We begin with the raw amino-acid sequence, 1381 residues long: Hepatocyte growth factor receptor (1381 aa).

The first 24 residues, M1–G24, serve as a signal peptide directing secretion. Residues E25–T932 lie on the Extracellular side of the membrane. A Sema domain is found at K27 to L515. N45 and N74 each carry an N-linked (GlcNAc...) asparagine glycan. 6 disulfides stabilise this stretch: C95–C101, C98–C159, C133–C141, C172–C175, C298–C363, and C385–C397. N106 is a glycosylation site (N-linked (GlcNAc...) asparagine). A glycan (N-linked (GlcNAc...) asparagine) is linked at N358. Residue N399 is glycosylated (N-linked (GlcNAc...) asparagine). 4 disulfides stabilise this stretch: C520–C538, C526–C561, C529–C545, and C541–C551. IPT/TIG domains follow at residues P563–V655, P657–R739, and P742–V836. T582 carries an O-linked (Man) threonine glycan. Residues N607 and N635 are each glycosylated (N-linked (GlcNAc...) asparagine). Residues T676 and T761 are each glycosylated (O-linked (Man) threonine). 3 N-linked (GlcNAc...) asparagine glycosylation sites follow: N785, N879, and N930. The helical transmembrane segment at G933–L955 threads the bilayer. Residues K956–T1381 are Cytoplasmic-facing. The residue at position 966 (S966) is a Phosphoserine. At T977 the chain carries Phosphothreonine. Residues S990, S997, and S1000 each carry the phosphoserine modification. Phosphotyrosine is present on Y1003. One can recognise a Protein kinase domain in the interval V1078–I1345. ATP is bound by residues I1084–V1092 and K1110. D1204 (proton acceptor) is an active-site residue. The interval L1212–T1381 is interaction with RANBP9. Residue Y1230 is modified to Phosphotyrosine. Residues Y1234 and Y1235 each carry the phosphotyrosine; by autocatalysis modification. At T1289 the chain carries Phosphothreonine. An interaction with MUC20 region spans residues W1320–V1359. A phosphotyrosine; by autocatalysis mark is found at Y1349 and Y1356. Y1365 is subject to Phosphotyrosine.

Belongs to the protein kinase superfamily. Tyr protein kinase family. Heterodimer made of an alpha chain (50 kDa) and a beta chain (145 kDa) which are disulfide linked. Binds PLXNB1. Interacts when phosphorylated with downstream effectors including STAT3, PIK3R1, SRC, PCLG1, GRB2 and GAB1. Interacts with SPSB1, SPSB2 and SPSB4. Interacts with INPP5D/SHIP1. When phosphorylated at Tyr-1356, interacts with INPPL1/SHIP2. Interacts with RANBP9 and RANBP10, as well as SPSB1, SPSB2, SPSB3 and SPSB4. SPSB1 binding occurs in the presence and in the absence of HGF, however HGF treatment has a positive effect on this interaction. Interacts with MUC20; prevents interaction with GRB2 and suppresses hepatocyte growth factor-induced cell proliferation. Interacts with GRB10. Interacts with PTPN1 and PTPN2. Interacts with HSP90AA1 and HSP90AB1; the interaction suppresses MET kinase activity. Interacts with tensin TNS3. Interacts (when phosphorylated) with tensin TNS4 (via SH2 domain); the interaction increases MET protein stability by inhibiting MET endocytosis and subsequent lysosomal degradation. In terms of processing, autophosphorylated in response to ligand binding on Tyr-1234 and Tyr-1235 in the kinase domain leading to further phosphorylation of Tyr-1349 and Tyr-1356 in the C-terminal multifunctional docking site. Dephosphorylated by PTPRJ at Tyr-1349 and Tyr-1365. Dephosphorylated by PTPN1 and PTPN2. Post-translationally, ubiquitinated. Ubiquitination by CBL regulates the receptor stability and activity through proteasomal degradation. O-mannosylation of IPT/TIG domains by TMEM260 is required for protein maturation. O-mannosylated residues are composed of single mannose glycans that are not elongated or modified.

It localises to the membrane. The catalysed reaction is L-tyrosyl-[protein] + ATP = O-phospho-L-tyrosyl-[protein] + ADP + H(+). With respect to regulation, in its inactive state, the C-terminal tail interacts with the catalytic domain and inhibits the kinase activity. Upon ligand binding, the C-terminal tail is displaced and becomes phosphorylated, thus increasing the kinase activity. In terms of biological role, receptor tyrosine kinase that transduces signals from the extracellular matrix into the cytoplasm by binding to hepatocyte growth factor/HGF ligand. Regulates many physiological processes including proliferation, scattering, morphogenesis and survival. Ligand binding at the cell surface induces autophosphorylation of MET on its intracellular domain that provides docking sites for downstream signaling molecules. Following activation by ligand, interacts with the PI3-kinase subunit PIK3R1, PLCG1, SRC, GRB2, STAT3 or the adapter GAB1. Recruitment of these downstream effectors by MET leads to the activation of several signaling cascades including the RAS-ERK, PI3 kinase-AKT, or PLCgamma-PKC. The RAS-ERK activation is associated with the morphogenetic effects while PI3K/AKT coordinates prosurvival effects. During embryonic development, MET signaling plays a role in gastrulation, development and migration of muscles and neuronal precursors, angiogenesis and kidney formation. In adults, participates in wound healing as well as organ regeneration and tissue remodeling. Also promotes differentiation and proliferation of hematopoietic cells. The protein is Hepatocyte growth factor receptor (MET) of Rhinolophus ferrumequinum (Greater horseshoe bat).